The following is a 696-amino-acid chain: Polyribonucleotide nucleotidyltransferase (696 aa).

2 residues coordinate Mg(2+): Asp-489 and Asp-495. The KH domain occupies 556-615 (PQYVTMKINPEKIRDVIGKGGVVIREITEATNCAIDISDDGTIKIAAHTTEEGEAAKRRI). In terms of domain architecture, S1 motif spans 625 to 693 (GKVYEGTVVK…RQGRVRLSMK (69 aa)).

The protein belongs to the polyribonucleotide nucleotidyltransferase family. In terms of assembly, component of the RNA degradosome, which is a multiprotein complex involved in RNA processing and mRNA degradation. The cofactor is Mg(2+).

It localises to the cytoplasm. It catalyses the reaction RNA(n+1) + phosphate = RNA(n) + a ribonucleoside 5'-diphosphate. In terms of biological role, involved in mRNA degradation. Catalyzes the phosphorolysis of single-stranded polyribonucleotides processively in the 3'- to 5'-direction. In Coxiella burnetii (strain CbuG_Q212) (Coxiella burnetii (strain Q212)), this protein is Polyribonucleotide nucleotidyltransferase.